Here is a 187-residue protein sequence, read N- to C-terminus: UPF0340 protein SPD_0576 (187 aa).

This sequence belongs to the UPF0340 family.

This Streptococcus pneumoniae serotype 2 (strain D39 / NCTC 7466) protein is UPF0340 protein SPD_0576.